The sequence spans 125 residues: Small ribosomal subunit protein uS13 (125 aa).

A disordered region spans residues 97–125; it reads PVRGQKTRSNARTRKGPRPSRIKTKKKSS. Basic residues predominate over residues 101-125; that stretch reads QKTRSNARTRKGPRPSRIKTKKKSS.

This sequence belongs to the universal ribosomal protein uS13 family. As to quaternary structure, part of the 30S ribosomal subunit. Forms a loose heterodimer with protein S19. Forms two bridges to the 50S subunit in the 70S ribosome.

Located at the top of the head of the 30S subunit, it contacts several helices of the 16S rRNA. In the 70S ribosome it contacts the 23S rRNA (bridge B1a) and protein L5 of the 50S subunit (bridge B1b), connecting the 2 subunits; these bridges are implicated in subunit movement. Contacts the tRNAs in the A and P-sites. This Thermotoga neapolitana (strain ATCC 49049 / DSM 4359 / NBRC 107923 / NS-E) protein is Small ribosomal subunit protein uS13.